Here is a 571-residue protein sequence, read N- to C-terminus: Sulfite reductase [NADPH] hemoprotein beta-component (571 aa).

The [4Fe-4S] cluster site is built by C435, C441, C480, and C484. Position 484 (C484) interacts with siroheme.

This sequence belongs to the nitrite and sulfite reductase 4Fe-4S domain family. In terms of assembly, alpha(8)-beta(8). The alpha component is a flavoprotein, the beta component is a hemoprotein. Siroheme serves as cofactor. It depends on [4Fe-4S] cluster as a cofactor.

The enzyme catalyses hydrogen sulfide + 3 NADP(+) + 3 H2O = sulfite + 3 NADPH + 4 H(+). The protein operates within sulfur metabolism; hydrogen sulfide biosynthesis; hydrogen sulfide from sulfite (NADPH route): step 1/1. Functionally, component of the sulfite reductase complex that catalyzes the 6-electron reduction of sulfite to sulfide. This is one of several activities required for the biosynthesis of L-cysteine from sulfate. The protein is Sulfite reductase [NADPH] hemoprotein beta-component of Serratia proteamaculans (strain 568).